Reading from the N-terminus, the 368-residue chain is Zinc finger protein 24 (368 aa).

A Glycyl lysine isopeptide (Lys-Gly) (interchain with G-Cter in SUMO2) cross-link involves residue Lys-22. Lys-27 is covalently cross-linked (Glycyl lysine isopeptide (Lys-Gly) (interchain with G-Cter in SUMO1); alternate). Residue Lys-27 forms a Glycyl lysine isopeptide (Lys-Gly) (interchain with G-Cter in SUMO2); alternate linkage. Residues 52–134 (RQRFRQFGYQ…TVLEDLESEL (83 aa)) enclose the SCAN box domain. Phosphoserine is present on residues Ser-132 and Ser-142. Residues Lys-147, Lys-177, and Lys-236 each participate in a glycyl lysine isopeptide (Lys-Gly) (interchain with G-Cter in SUMO2) cross-link. A C2H2-type 1 zinc finger spans residues 251-273 (HICDECGKHFSQGSALILHQRIH). The necessary and sufficient for nuclear localization stretch occupies residues 251–301 (HICDECGKHFSQGSALILHQRIHSGEKPYGCVECGKAFSRSSILVQHQRVH). Ser-274 is modified (phosphoserine). Glycyl lysine isopeptide (Lys-Gly) (interchain with G-Cter in SUMO2) cross-links involve residues Lys-277 and Lys-286. 3 consecutive C2H2-type zinc fingers follow at residues 279–301 (YGCV…QRVH), 307–329 (YKCL…QRIH), and 335–357 (YECV…QRRH). Ser-292 is subject to Phosphoserine. Tyr-335 is modified (phosphotyrosine). Glycyl lysine isopeptide (Lys-Gly) (interchain with G-Cter in SUMO2) cross-links involve residues Lys-361 and Lys-367.

The protein belongs to the krueppel C2H2-type zinc-finger protein family. Sumoylated.

The protein localises to the nucleus. In terms of biological role, transcription factor required for myelination of differentiated oligodendrocytes. Required for the conversion of oligodendrocytes from the premyelinating to the myelinating state. In the developing central nervous system (CNS), involved in the maintenance in the progenitor stage by promoting the cell cycle. Specifically binds to the 5'-TCAT-3' DNA sequence. Has transcription repressor activity in vitro. In Rattus norvegicus (Rat), this protein is Zinc finger protein 24 (Znf24).